The primary structure comprises 337 residues: Cysteine synthase 3 (337 aa).

At K47 the chain carries N6-(pyridoxal phosphate)lysine. Pyridoxal 5'-phosphate-binding positions include N78, 182-186 (GSSGT), and S270.

Belongs to the cysteine synthase/cystathionine beta-synthase family. Homodimer. It depends on pyridoxal 5'-phosphate as a cofactor.

It catalyses the reaction O-acetyl-L-serine + hydrogen sulfide = L-cysteine + acetate. It functions in the pathway amino-acid biosynthesis; L-cysteine biosynthesis; L-cysteine from L-serine: step 2/2. In terms of biological role, primarily catalyzes the formation of cysteine and acetate from O-acetylserine and hydrogen sulfide. Can also catalyze the formation of cysteine and acetate from S-sulfocysteine and hydrogen sulfide and the formation of cyanoalanine and hydrogen sulfide from either S-sulfocysteine or O-acetylserine and hydrogen cyanide. This Caenorhabditis elegans protein is Cysteine synthase 3.